The sequence spans 292 residues: Norajmaline N-methyltransferase (292 aa).

Residues 71-80 (KNMLDIGCGV) form an SAM motif I region. The segment at 134 to 142 (KDGTFDLVL) is SAM motif II. The Vacuolar targeting signal motif lies at 135–141 (DGTFDLV). Residues 161 to 170 (IRVAAPGAPI) are SAM motif III.

The protein belongs to the class I-like SAM-binding methyltransferase superfamily. gTMT family. Homodimer. As to expression, mainly expressed in mature roots and, to a lesser extent, in leaves, stems and flowers.

It localises to the vacuole membrane. The enzyme catalyses norajmaline + S-adenosyl-L-methionine = ajmaline + S-adenosyl-L-homocysteine + H(+). It catalyses the reaction 4-methylnorajmaline + S-adenosyl-L-methionine = 4-methylajmaline + S-adenosyl-L-homocysteine + H(+). The protein operates within alkaloid biosynthesis; ajmaline biosynthesis. Its function is as follows. N-methyltransferase involved in the biosynthesis of ajmaline-type monoterpenoid indole alkaloids (MIAs) natural products, important plant-derived pharmaceuticals used in the therapy of heart disorders. Catalyzes the indole N-methylation of norajmaline to produce ajmaline. Also able, with a lower efficiency, to mediates the conversion of 4-methylnorajmaline to 4-methylajmaline. In Rauvolfia serpentina (Serpentine wood), this protein is Norajmaline N-methyltransferase.